The following is a 132-amino-acid chain: Small ribosomal subunit protein uS8 (132 aa).

Belongs to the universal ribosomal protein uS8 family. Part of the 30S ribosomal subunit. Contacts proteins S5 and S12.

In terms of biological role, one of the primary rRNA binding proteins, it binds directly to 16S rRNA central domain where it helps coordinate assembly of the platform of the 30S subunit. In Oceanobacillus iheyensis (strain DSM 14371 / CIP 107618 / JCM 11309 / KCTC 3954 / HTE831), this protein is Small ribosomal subunit protein uS8.